Here is a 1502-residue protein sequence, read N- to C-terminus: Gem-associated protein 5 (1502 aa).

The tract at residues 1-124 is important for interaction with U1 snRNA; it reads MKPEPRTLPP…LHWSPTVKDL (124 aa). The tract at residues 13 to 15 is interaction with U4 snRNA; it reads NWY. Ser48 carries the post-translational modification Phosphoserine. WD repeat units follow at residues 62 to 104, 107 to 148, 150 to 189, 193 to 264, 280 to 321, 333 to 374, 377 to 417, 424 to 464, 468 to 509, 533 to 573, and 576 to 622; these read GHTE…VVTE, LHQH…QHLF, EPRT…EVIH, GHDD…GVMV, TVKE…RRKY, HSRI…CCWT, SLGG…NNYD, GVKS…PPQI, YHKK…VVLQ, RYKL…LLCT, and QHHK…ESNP. The residue at position 624 (Ser624) is a Phosphoserine. 2 WD repeats span residues 637–677 and 680–720; these read GHTA…PLFN and GHRG…HSRP. Disordered stretches follow at residues 740-797 and 819-838; these read KLKK…SPVV and SSKA…EALL. Residue Lys754 forms a Glycyl lysine isopeptide (Lys-Gly) (interchain with G-Cter in SUMO2) linkage. A phosphoserine mark is found at Ser757, Ser770, and Ser778. Over residues 825–838 the composition is skewed to basic and acidic residues; it reads LKKEPAKEKPEALL. A Phosphoserine modification is found at Ser845. 2 disordered regions span residues 1309-1338 and 1378-1427; these read VSDK…LSAE and HQKS…SLPE. A coiled-coil region spans residues 1355 to 1382; sequence ASLQTSQRTVAEVQETLAEMIRQHQKSQ. Over residues 1380–1391 the composition is skewed to polar residues; that stretch reads KSQLCKATTNGP. The segment covering 1392 to 1407 has biased composition (basic and acidic residues); that stretch reads SRDEPSRDEPSQEAER.

Belongs to the WD repeat gemin-5 family. As to quaternary structure, part of the core SMN complex that contains SMN1, GEMIN2/SIP1, DDX20/GEMIN3, GEMIN4, GEMIN5, GEMIN6, GEMIN7, GEMIN8 and STRAP/UNRIP. Part of the SMN-Sm complex that contains SMN1, GEMIN2/SIP1, DDX20/GEMIN3, GEMIN4, GEMIN5, GEMIN6, GEMIN7, GEMIN8, STRAP/UNRIP and the Sm proteins SNRPB, SNRPD1, SNRPD2, SNRPD3, SNRPE, SNRPF and SNRPG. Interacts directly with SMN1, SNRPB, SNRPD1, SNRPD2, SNRPD3 and SNRPE. Identified in a SMN complex that contains GEMIN2/SIP1. Interacts with cytosolic DDX20/GEMIN3 and GEMIN4. Interacts with SNRNP70 and HNRNPU. Identified in a complex with 80S ribosomes; binds to the 60S large ribosomal subunit. Interacts with the ribosomal subunits RPL3 and RPL4.

The protein localises to the nucleus. The protein resides in the nucleoplasm. It localises to the gem. Its subcellular location is the cytoplasm. Functionally, the SMN complex catalyzes the assembly of small nuclear ribonucleoproteins (snRNPs), the building blocks of the spliceosome, and thereby plays an important role in the splicing of cellular pre-mRNAs. Most spliceosomal snRNPs contain a common set of Sm proteins SNRPB, SNRPD1, SNRPD2, SNRPD3, SNRPE, SNRPF and SNRPG that assemble in a heptameric protein ring on the Sm site of the small nuclear RNA to form the core snRNP (Sm core). In the cytosol, the Sm proteins SNRPD1, SNRPD2, SNRPE, SNRPF and SNRPG are trapped in an inactive 6S pICln-Sm complex by the chaperone CLNS1A that controls the assembly of the core snRNP. To assemble core snRNPs, the SMN complex accepts the trapped 5Sm proteins from CLNS1A forming an intermediate. Binding of snRNA inside 5Sm ultimately triggers eviction of the SMN complex, thereby allowing binding of SNRPD3 and SNRPB to complete assembly of the core snRNP. Within the SMN complex, GEMIN5 recognizes and delivers the small nuclear RNAs (snRNAs) to the SMN complex. Binds to the 7-methylguanosine cap of RNA molecules. Binds to the 3'-UTR of SMN1 mRNA and regulates its translation; does not affect mRNA stability. May play a role in the regulation of protein synthesis via its interaction with ribosomes. This Mus musculus (Mouse) protein is Gem-associated protein 5 (Gemin5).